Here is a 458-residue protein sequence, read N- to C-terminus: Zinc finger protein 239 (458 aa).

A Glycyl lysine isopeptide (Lys-Gly) (interchain with G-Cter in SUMO2) cross-link involves residue Lys-108. Residue Ser-191 is modified to Phosphoserine. 9 consecutive C2H2-type zinc fingers follow at residues 207-229 (YECS…QRDH), 235-257 (YKCE…QAVH), 263-285 (YKCD…HAVH), 291-313 (YKCD…QRVH), 319-341 (YECE…QRVH), 347-369 (YKCG…RCIH), 375-397 (YQCY…LRVH), 403-425 (YHCG…QRVH), and 431-453 (YECS…QRVH).

Belongs to the krueppel C2H2-type zinc-finger protein family.

It localises to the nucleus. May be involved in transcriptional regulation. The chain is Zinc finger protein 239 (ZNF239) from Homo sapiens (Human).